Here is a 206-residue protein sequence, read N- to C-terminus: Outer-membrane lipoprotein carrier protein (206 aa).

Residues 1 to 21 (MKKLLCAVLLSPLLYSNAVLA) form the signal peptide.

The protein belongs to the LolA family. As to quaternary structure, monomer.

Its subcellular location is the periplasm. Participates in the translocation of lipoproteins from the inner membrane to the outer membrane. Only forms a complex with a lipoprotein if the residue after the N-terminal Cys is not an aspartate (The Asp acts as a targeting signal to indicate that the lipoprotein should stay in the inner membrane). The chain is Outer-membrane lipoprotein carrier protein from Shewanella oneidensis (strain ATCC 700550 / JCM 31522 / CIP 106686 / LMG 19005 / NCIMB 14063 / MR-1).